The following is a 432-amino-acid chain: Enolase (432 aa).

Gln166 provides a ligand contact to (2R)-2-phosphoglycerate. Glu208 serves as the catalytic Proton donor. Residues Asp245, Glu291, and Asp318 each contribute to the Mg(2+) site. (2R)-2-phosphoglycerate-binding residues include Lys343, Arg372, Ser373, and Lys394. Lys343 functions as the Proton acceptor in the catalytic mechanism.

The protein belongs to the enolase family. Mg(2+) serves as cofactor.

It is found in the cytoplasm. Its subcellular location is the secreted. The protein localises to the cell surface. The enzyme catalyses (2R)-2-phosphoglycerate = phosphoenolpyruvate + H2O. Its pathway is carbohydrate degradation; glycolysis; pyruvate from D-glyceraldehyde 3-phosphate: step 4/5. Functionally, catalyzes the reversible conversion of 2-phosphoglycerate (2-PG) into phosphoenolpyruvate (PEP). It is essential for the degradation of carbohydrates via glycolysis. This is Enolase from Leptospira interrogans serogroup Icterohaemorrhagiae serovar copenhageni (strain Fiocruz L1-130).